We begin with the raw amino-acid sequence, 204 residues long: ATP-dependent Clp protease proteolytic subunit (204 aa).

S102 acts as the Nucleophile in catalysis. H127 is an active-site residue.

This sequence belongs to the peptidase S14 family. As to quaternary structure, fourteen ClpP subunits assemble into 2 heptameric rings which stack back to back to give a disk-like structure with a central cavity, resembling the structure of eukaryotic proteasomes.

It localises to the cytoplasm. It carries out the reaction Hydrolysis of proteins to small peptides in the presence of ATP and magnesium. alpha-casein is the usual test substrate. In the absence of ATP, only oligopeptides shorter than five residues are hydrolyzed (such as succinyl-Leu-Tyr-|-NHMec, and Leu-Tyr-Leu-|-Tyr-Trp, in which cleavage of the -Tyr-|-Leu- and -Tyr-|-Trp bonds also occurs).. Cleaves peptides in various proteins in a process that requires ATP hydrolysis. Has a chymotrypsin-like activity. Plays a major role in the degradation of misfolded proteins. The chain is ATP-dependent Clp protease proteolytic subunit from Neisseria gonorrhoeae (strain ATCC 700825 / FA 1090).